Consider the following 280-residue polypeptide: uncharacterized protein (280 aa).

Disordered regions lie at residues 1–124 (MPRD…QREA) and 177–280 (LEEE…LSSK). 2 stretches are compositionally biased toward basic residues: residues 16–36 (SRRR…RSRR) and 48–83 (YSRR…RQKS). Composition is skewed to basic and acidic residues over residues 102–124 (AKNR…QREA) and 182–259 (EASL…ERLK).

This is an uncharacterized protein from Arabidopsis thaliana (Mouse-ear cress).